Here is a 714-residue protein sequence, read N- to C-terminus: Fatty acid oxidation complex subunit alpha (714 aa).

An enoyl-CoA hydratase region spans residues 1–190; it reads MEMASAFTLN…KLGLVDDVVP (190 aa). The interval 306 to 714 is 3-hydroxyacyl-CoA dehydrogenase; that stretch reads APLNSVGILG…FWKTTATDLQ (409 aa).

In the N-terminal section; belongs to the enoyl-CoA hydratase/isomerase family. This sequence in the central section; belongs to the 3-hydroxyacyl-CoA dehydrogenase family. In terms of assembly, heterotetramer of two alpha chains (FadJ) and two beta chains (FadI).

The protein resides in the cytoplasm. It catalyses the reaction a (3S)-3-hydroxyacyl-CoA = a (2E)-enoyl-CoA + H2O. The catalysed reaction is a 4-saturated-(3S)-3-hydroxyacyl-CoA = a (3E)-enoyl-CoA + H2O. It carries out the reaction a (3S)-3-hydroxyacyl-CoA + NAD(+) = a 3-oxoacyl-CoA + NADH + H(+). The enzyme catalyses (3S)-3-hydroxybutanoyl-CoA = (3R)-3-hydroxybutanoyl-CoA. It participates in lipid metabolism; fatty acid beta-oxidation. Its function is as follows. Catalyzes the formation of a hydroxyacyl-CoA by addition of water on enoyl-CoA. Also exhibits 3-hydroxyacyl-CoA epimerase and 3-hydroxyacyl-CoA dehydrogenase activities. This chain is Fatty acid oxidation complex subunit alpha, found in Escherichia coli O45:K1 (strain S88 / ExPEC).